A 251-amino-acid chain; its full sequence is DNA repair protein RecO (251 aa).

This sequence belongs to the RecO family.

Its function is as follows. Involved in DNA repair and RecF pathway recombination. This Acidiphilium cryptum (strain JF-5) protein is DNA repair protein RecO.